We begin with the raw amino-acid sequence, 378 residues long: Beta sliding clamp (378 aa).

Belongs to the beta sliding clamp family. As to quaternary structure, forms a ring-shaped head-to-tail homodimer around DNA which binds and tethers DNA polymerases and other proteins to the DNA. The DNA replisome complex has a single clamp-loading complex (3 tau and 1 each of delta, delta', psi and chi subunits) which binds 3 Pol III cores (1 core on the leading strand and 2 on the lagging strand) each with a beta sliding clamp dimer. Additional proteins in the replisome are other copies of gamma, psi and chi, Ssb, DNA helicase and RNA primase.

The protein localises to the cytoplasm. In terms of biological role, confers DNA tethering and processivity to DNA polymerases and other proteins. Acts as a clamp, forming a ring around DNA (a reaction catalyzed by the clamp-loading complex) which diffuses in an ATP-independent manner freely and bidirectionally along dsDNA. Initially characterized for its ability to contact the catalytic subunit of DNA polymerase III (Pol III), a complex, multichain enzyme responsible for most of the replicative synthesis in bacteria; Pol III exhibits 3'-5' exonuclease proofreading activity. The beta chain is required for initiation of replication as well as for processivity of DNA replication. In Streptococcus pneumoniae serotype 4 (strain ATCC BAA-334 / TIGR4), this protein is Beta sliding clamp (dnaN).